Reading from the N-terminus, the 89-residue chain is MVMAMDQNLFNEVMYLLDELSQDTTVPKNVRKVAQDSKTKLSQENESLDLRCATVLSMLDEMANDPNVPSHGRTDLYTIISKLEALAKS.

It belongs to the UPF0147 family.

This is UPF0147 protein TV0625 from Thermoplasma volcanium (strain ATCC 51530 / DSM 4299 / JCM 9571 / NBRC 15438 / GSS1).